Consider the following 438-residue polypeptide: Protein maelstrom 1 (438 aa).

A DNA-binding region (HMG box) is located at residues 2–69 (APKKRNGFMT…LERTAKKERL (68 aa)). The tract at residues 374–438 (KEMGSRDLSP…NMGAGKKIAR (65 aa)) is disordered. The span at 381-391 (LSPSSSHQSVS) shows a compositional bias: polar residues.

Belongs to the maelstrom family.

It localises to the cytoplasm. It is found in the nucleus. Its function is as follows. Involved both in the piRNA and miRNA metabolic processes. As a component of the meiotic nuage, plays a central role during oogenesis by repressing transposable elements and preventing their mobilization, which is essential for the germline integrity. Repression of transposable elements is mediated via the piRNA metabolic process, which mediates the repression of transposable elements during meiosis by forming complexes composed of piRNAs and Piwi proteins and governs the repression of transposons. As a nuclear component, it is required for proper differentiation in the germline stem cell (GSC) lineage by repressing microRNA-7 (miR-7), thereby acting as an indirect regulator of bag-of-marbles (Bam). Acts by binding to the promoter of miR-7 gene and repressing its expression; miR-7 repression alleviates the Bam repression by miR-7, thereby allowing differentiation in the germline stem cell (GSC) lineage. The chain is Protein maelstrom 1 (mael1) from Drosophila persimilis (Fruit fly).